We begin with the raw amino-acid sequence, 252 residues long: Large ribosomal subunit protein uL10m (252 aa).

The transit peptide at Met-1 to His-24 directs the protein to the mitochondrion.

This sequence belongs to the universal ribosomal protein uL10 family. In terms of assembly, component of the mitochondrial ribosome large subunit (39S) which comprises a 16S rRNA and about 50 distinct proteins.

It is found in the mitochondrion. The protein is Large ribosomal subunit protein uL10m (mrpl10) of Danio rerio (Zebrafish).